The chain runs to 395 residues: 1-deoxy-D-xylulose 5-phosphate reductoisomerase (395 aa).

NADPH-binding residues include T10, G11, S12, I13, K37, and N123. K124 lines the 1-deoxy-D-xylulose 5-phosphate pocket. NADPH is bound at residue E125. D149 is a binding site for Mn(2+). Residues S150, E151, S185, and H208 each contribute to the 1-deoxy-D-xylulose 5-phosphate site. E151 contributes to the Mn(2+) binding site. G214 provides a ligand contact to NADPH. 1-deoxy-D-xylulose 5-phosphate-binding residues include S221, N226, K227, and E230. A Mn(2+)-binding site is contributed by E230.

It belongs to the DXR family. The cofactor is Mg(2+). It depends on Mn(2+) as a cofactor.

It carries out the reaction 2-C-methyl-D-erythritol 4-phosphate + NADP(+) = 1-deoxy-D-xylulose 5-phosphate + NADPH + H(+). It functions in the pathway isoprenoid biosynthesis; isopentenyl diphosphate biosynthesis via DXP pathway; isopentenyl diphosphate from 1-deoxy-D-xylulose 5-phosphate: step 1/6. Functionally, catalyzes the NADPH-dependent rearrangement and reduction of 1-deoxy-D-xylulose-5-phosphate (DXP) to 2-C-methyl-D-erythritol 4-phosphate (MEP). This is 1-deoxy-D-xylulose 5-phosphate reductoisomerase from Shewanella loihica (strain ATCC BAA-1088 / PV-4).